Consider the following 258-residue polypeptide: Small ribosomal subunit protein uS2 (258 aa).

This sequence belongs to the universal ribosomal protein uS2 family.

The polypeptide is Small ribosomal subunit protein uS2 (Leuconostoc citreum (strain KM20)).